We begin with the raw amino-acid sequence, 327 residues long: tRNA dimethylallyltransferase (327 aa).

14 to 21 is a binding site for ATP; sequence GPTASGKT. 16 to 21 serves as a coordination point for substrate; the sequence is TASGKT. 2 interaction with substrate tRNA regions span residues 39–42 and 163–167; these read DSAL and QRIQR.

It belongs to the IPP transferase family. As to quaternary structure, monomer. Requires Mg(2+) as cofactor.

It catalyses the reaction adenosine(37) in tRNA + dimethylallyl diphosphate = N(6)-dimethylallyladenosine(37) in tRNA + diphosphate. Catalyzes the transfer of a dimethylallyl group onto the adenine at position 37 in tRNAs that read codons beginning with uridine, leading to the formation of N6-(dimethylallyl)adenosine (i(6)A). This Xanthomonas euvesicatoria pv. vesicatoria (strain 85-10) (Xanthomonas campestris pv. vesicatoria) protein is tRNA dimethylallyltransferase.